The primary structure comprises 481 residues: Bifunctional protein GlmU (481 aa).

Residues 1–235 (MTHKERPLDV…PDEVMGANDR (235 aa)) form a pyrophosphorylase region. UDP-N-acetyl-alpha-D-glucosamine is bound by residues 13 to 16 (LAAG), Lys27, Gln78, 83 to 84 (GT), 107 to 109 (YGD), Gly146, Glu161, Asn176, and Asn233. Asp109 contributes to the Mg(2+) binding site. Asn233 contributes to the Mg(2+) binding site. A linker region spans residues 236–256 (VQLAQAAAVLRRRINTAHMQA). An N-acetyltransferase region spans residues 257–481 (GVTLQDPSTI…PWLAGWLERQ (225 aa)). The UDP-N-acetyl-alpha-D-glucosamine site is built by Arg339 and Lys357. Residue His369 is the Proton acceptor of the active site. 2 residues coordinate UDP-N-acetyl-alpha-D-glucosamine: Tyr372 and Asn383. Residues Ala386, Ser411, Ala429, and Arg446 each coordinate acetyl-CoA.

The protein in the N-terminal section; belongs to the N-acetylglucosamine-1-phosphate uridyltransferase family. It in the C-terminal section; belongs to the transferase hexapeptide repeat family. Homotrimer. Mg(2+) serves as cofactor.

It localises to the cytoplasm. It carries out the reaction alpha-D-glucosamine 1-phosphate + acetyl-CoA = N-acetyl-alpha-D-glucosamine 1-phosphate + CoA + H(+). The catalysed reaction is N-acetyl-alpha-D-glucosamine 1-phosphate + UTP + H(+) = UDP-N-acetyl-alpha-D-glucosamine + diphosphate. Its pathway is nucleotide-sugar biosynthesis; UDP-N-acetyl-alpha-D-glucosamine biosynthesis; N-acetyl-alpha-D-glucosamine 1-phosphate from alpha-D-glucosamine 6-phosphate (route II): step 2/2. It participates in nucleotide-sugar biosynthesis; UDP-N-acetyl-alpha-D-glucosamine biosynthesis; UDP-N-acetyl-alpha-D-glucosamine from N-acetyl-alpha-D-glucosamine 1-phosphate: step 1/1. It functions in the pathway bacterial outer membrane biogenesis; LPS lipid A biosynthesis. Functionally, catalyzes the last two sequential reactions in the de novo biosynthetic pathway for UDP-N-acetylglucosamine (UDP-GlcNAc). The C-terminal domain catalyzes the transfer of acetyl group from acetyl coenzyme A to glucosamine-1-phosphate (GlcN-1-P) to produce N-acetylglucosamine-1-phosphate (GlcNAc-1-P), which is converted into UDP-GlcNAc by the transfer of uridine 5-monophosphate (from uridine 5-triphosphate), a reaction catalyzed by the N-terminal domain. The chain is Bifunctional protein GlmU from Deinococcus geothermalis (strain DSM 11300 / CIP 105573 / AG-3a).